The primary structure comprises 611 residues: Mitogen-activated protein kinase 10 (611 aa).

In terms of domain architecture, Protein kinase spans 25 to 316; that stretch reads YKIQEVIGKG…AEEALAHPYF (292 aa). Residues 31–39 and Lys54 each bind ATP; that span reads IGKGSYGVV. The active-site Proton acceptor is the Asp151. Thr187 is modified (phosphothreonine). The short motif at 187-189 is the TXY element; the sequence is TDY. Residue Tyr189 is modified to Phosphotyrosine. Residues 394 to 481 are disordered; it reads ENGGNGPVIP…RVVGPVLPYE (88 aa). Basic and acidic residues predominate over residues 426–439; sequence EQPRIGPSRDKPSD.

The protein belongs to the protein kinase superfamily. CMGC Ser/Thr protein kinase family. MAP kinase subfamily. In terms of processing, dually phosphorylated on Thr-187 and Tyr-189, which activates the enzyme.

The catalysed reaction is L-seryl-[protein] + ATP = O-phospho-L-seryl-[protein] + ADP + H(+). The enzyme catalyses L-threonyl-[protein] + ATP = O-phospho-L-threonyl-[protein] + ADP + H(+). Activated by threonine and tyrosine phosphorylation. This chain is Mitogen-activated protein kinase 10 (MPK10), found in Oryza sativa subsp. japonica (Rice).